A 271-amino-acid polypeptide reads, in one-letter code: MKRVTGVNSRRVLRQAVRVSLKPVYKMYERILEEKVKEGRVPEHVGIIMDGNRRFARELGLEPWEGHRYGADKLEDVLEWCLDLGVKAVTVYALSTENLNRPKEELKRLFDLMEERFKALAESERIHRRKVAVRAVGRLHLLPTRVRRAIKKAERATKEYKDRFLNVAVAYGGRQEIIDAVREIAHDVKVGRLDPDEIDEGTFRKYVYVGDLPDPELIIRTSGEERLSNFLLWYSAYSELYFVDVYWPEFRKIDLLRAIREFQKRERRFGR.

Residue Asp-50 is part of the active site. A Mg(2+)-binding site is contributed by Asp-50. Residues 51 to 54, Phe-55, His-67, and 95 to 97 contribute to the substrate site; these read GNRR and STE. Asn-98 acts as the Proton acceptor in catalysis. Substrate contacts are provided by residues Arg-101, Arg-220, and 226 to 228; that span reads RLS. Glu-239 serves as a coordination point for Mg(2+).

The protein belongs to the UPP synthase family. Homodimer. The cofactor is Mg(2+).

It carries out the reaction geranylgeranyl diphosphate + 7 isopentenyl diphosphate = tri-trans,hepta-cis-undecaprenyl diphosphate + 7 diphosphate. Its function is as follows. Catalyzes the sequential condensation of isopentenyl diphosphate (IPP) with geranylgeranyl diphosphate (GGPP) to yield (2Z,6Z,10Z,14Z,18Z,22Z,26Z,30E,34E,38E)-undecaprenyl diphosphate (tritrans,heptacis-UPP). It is probably the precursor of glycosyl carrier lipids. This chain is Tritrans,polycis-undecaprenyl-diphosphate synthase (geranylgeranyl-diphosphate specific), found in Methanopyrus kandleri (strain AV19 / DSM 6324 / JCM 9639 / NBRC 100938).